The following is a 457-amino-acid chain: L-lysine-epsilon aminotransferase (457 aa).

Positions 131 and 132 each coordinate pyridoxal 5'-phosphate. 2-oxoglutarate is bound by residues arginine 172 and glutamine 278. Residue arginine 172 coordinates L-lysine. Position 278 (glutamine 278) interacts with pyridoxal 5'-phosphate. Lysine 304 bears the N6-(pyridoxal phosphate)lysine mark. A 2-oxoglutarate-binding site is contributed by arginine 427.

It belongs to the class-III pyridoxal-phosphate-dependent aminotransferase family. In terms of assembly, monomer. Requires pyridoxal 5'-phosphate as cofactor.

The catalysed reaction is L-lysine + 2-oxoglutarate = (S)-2-amino-6-oxohexanoate + L-glutamate. It functions in the pathway antibiotic biosynthesis; cephamycin C biosynthesis. Its activity is regulated as follows. Activity is induced in the presence of high concentrations of lysine, but not by L-alpha-aminoadipic acid. Not repressed by ammonium ions. Its function is as follows. Catalyzes the transfer of the terminal amino group of L-lysine to alpha-ketoglutarate to yield L-glutamate and 2-aminoadipate 6-semialdehyde ((S)-2-amino-6-oxohexanoate), which is spontaneously converted to the dehydrated form 1-piperideine 6-carboxylate. Shows a high specificity for L-lysine as substrate although L-ornithine can also be used, leading to the formation of an o-aminobenzaldehyde reactive compound. Only cis-oxaloacetate and pyruvate can replace alpha-ketoglutarate, but with very low efficiency. This Streptomyces clavuligerus protein is L-lysine-epsilon aminotransferase.